The chain runs to 152 residues: Snaclec lebecin subunit alpha (152 aa).

An N-terminal signal peptide occupies residues 1-23; sequence MGRSISVSFGLLVVFLSLSGTGA. Cystine bridges form between Cys-27/Cys-38, Cys-54/Cys-147, and Cys-122/Cys-139. In terms of domain architecture, C-type lectin spans 34 to 148; that stretch reads YEGGCYYVFD…CELAYHFICS (115 aa).

In terms of assembly, heterodimer with the beta subunit (AC W5XCJ6); disulfide-linked. In terms of tissue distribution, expressed by the venom gland.

It localises to the secreted. Its function is as follows. Inhibits human breast cancer cells (MDA-MB231) migration and proliferation, as well as their adhesion to fibrinogen and fibronectin. This inhibition may be due to the binding to receptors of the integrin family, probably alpha-v/beta-3 (ITGAV/ITGB3) (40% inhibition of cell adhesion) and alpha-5/beta-1 (ITGA5/ITGB1) (by comparison with lebectin). The chain is Snaclec lebecin subunit alpha from Macrovipera lebetinus (Levantine viper).